The primary structure comprises 40 residues: Photosystem II reaction center protein J (40 aa).

A helical membrane pass occupies residues 8-28 (IPLWLIGTVTGIAVIGLIGVF).

The protein belongs to the PsbJ family. In terms of assembly, PSII is composed of 1 copy each of membrane proteins PsbA, PsbB, PsbC, PsbD, PsbE, PsbF, PsbH, PsbI, PsbJ, PsbK, PsbL, PsbM, PsbT, PsbX, PsbY, PsbZ, Psb30/Ycf12, at least 3 peripheral proteins of the oxygen-evolving complex and a large number of cofactors. It forms dimeric complexes.

It localises to the plastid. The protein resides in the chloroplast thylakoid membrane. In terms of biological role, one of the components of the core complex of photosystem II (PSII). PSII is a light-driven water:plastoquinone oxidoreductase that uses light energy to abstract electrons from H(2)O, generating O(2) and a proton gradient subsequently used for ATP formation. It consists of a core antenna complex that captures photons, and an electron transfer chain that converts photonic excitation into a charge separation. The polypeptide is Photosystem II reaction center protein J (Oryza nivara (Indian wild rice)).